The sequence spans 512 residues: Neuronal acetylcholine receptor subunit alpha-2 (512 aa).

The first 27 residues, 1-27 (MAPSHPAFQFWIHLYLWCLLLMPAVLA), serve as a signal peptide directing secretion. The Extracellular portion of the chain corresponds to 28 to 241 (QQGSHTHAED…VTYYFVIRRL (214 aa)). Residues Asn-56 and Asn-106 are each glycosylated (N-linked (GlcNAc...) asparagine). The cysteines at positions 160 and 174 are disulfide-linked. An N-linked (GlcNAc...) asparagine glycan is attached at Asn-212. The cysteines at positions 224 and 225 are disulfide-linked. The next 3 helical transmembrane spans lie at 242 to 266 (PLFY…VFYL), 274 to 292 (ITLC…LLIT), and 308 to 329 (YLLF…VLNV). The Cytoplasmic segment spans residues 330-485 (HHRSPSTHNM…WKYVAMVVDR (156 aa)). Residues 486–504 (IFLWLFIIVCFLGTIGLFL) traverse the membrane as a helical segment.

The protein belongs to the ligand-gated ion channel (TC 1.A.9) family. Acetylcholine receptor (TC 1.A.9.1) subfamily. Alpha-2/CHRNA2 sub-subfamily. As to quaternary structure, neuronal AChR is composed of two different types of subunits: alpha and non-alpha (beta). CHRNA2/alpha-2 subunit can be combined to CHRNB2/beta-2 or CHRNB4/beta-4 to give rise to functional receptors. Both CHRNA2:CHRNB2 and CHRNA2:CHRNB4 nAChR complexes are heteropentamers with two subtypes: LS (low agonist sensitivity) with a (CHRNA2)3:(CHRNB2/4)2 and HS (high agonist sensitivity) with a (CHRNA2)2:(CHRNB2/4)3 stoichiometries; the subtypes differ in their subunit binding interfaces which are involved in ligand binding.

The protein resides in the synaptic cell membrane. It localises to the cell membrane. It carries out the reaction Ca(2+)(in) = Ca(2+)(out). The catalysed reaction is K(+)(in) = K(+)(out). It catalyses the reaction Na(+)(in) = Na(+)(out). Component of neuronal acetylcholine receptors (nAChRs) that function as pentameric, ligand-gated cation channels with high calcium permeability among other activities. nAChRs are excitatory neurotrasnmitter receptors formed by a collection of nAChR subunits known to mediate synaptic transmission in the nervous system and the neuromuscular junction. Each nAchR subunit confers differential attributes to channel properties, including activation, deactivation and desensitization kinetics, pH sensitivity, cation permeability, and binding to allosteric modulators. CHRNA2 forms heteropentameric neuronal acetylcholine receptors with CHRNB2 and CHRNB4 and plays a role in nicotine dependence. This Mus musculus (Mouse) protein is Neuronal acetylcholine receptor subunit alpha-2 (Chrna2).